Reading from the N-terminus, the 233-residue chain is Uridylate kinase (233 aa).

9–10 (GS) contacts ATP. Glycine 43 is a UMP binding site. The ATP site is built by glycine 44 and arginine 48. Residues aspartate 65 and 113-119 (VTPGQTT) each bind UMP. ATP is bound by residues threonine 139, tyrosine 145, and aspartate 148.

It belongs to the UMP kinase family. In terms of assembly, homohexamer.

Its subcellular location is the cytoplasm. It carries out the reaction UMP + ATP = UDP + ADP. The protein operates within pyrimidine metabolism; CTP biosynthesis via de novo pathway; UDP from UMP (UMPK route): step 1/1. With respect to regulation, inhibited by UTP. Functionally, catalyzes the reversible phosphorylation of UMP to UDP. This is Uridylate kinase from Methanosarcina acetivorans (strain ATCC 35395 / DSM 2834 / JCM 12185 / C2A).